A 112-amino-acid chain; its full sequence is Ribosome-binding factor A (112 aa).

It belongs to the RbfA family. In terms of assembly, monomer. Binds 30S ribosomal subunits, but not 50S ribosomal subunits or 70S ribosomes.

The protein localises to the cytoplasm. One of several proteins that assist in the late maturation steps of the functional core of the 30S ribosomal subunit. Associates with free 30S ribosomal subunits (but not with 30S subunits that are part of 70S ribosomes or polysomes). Required for efficient processing of 16S rRNA. May interact with the 5'-terminal helix region of 16S rRNA. The sequence is that of Ribosome-binding factor A from Mycoplasma genitalium (strain ATCC 33530 / DSM 19775 / NCTC 10195 / G37) (Mycoplasmoides genitalium).